The primary structure comprises 163 residues: NADH-quinone oxidoreductase subunit I (163 aa).

4Fe-4S ferredoxin-type domains are found at residues 54–84 and 94–123; these read LRRY…IDSA and TRYD…ETHI. The [4Fe-4S] cluster site is built by cysteine 64, cysteine 67, cysteine 70, cysteine 74, cysteine 103, cysteine 106, cysteine 109, and cysteine 113.

The protein belongs to the complex I 23 kDa subunit family. NDH-1 is composed of 14 different subunits. Subunits NuoA, H, J, K, L, M, N constitute the membrane sector of the complex. [4Fe-4S] cluster is required as a cofactor.

It localises to the cell inner membrane. The catalysed reaction is a quinone + NADH + 5 H(+)(in) = a quinol + NAD(+) + 4 H(+)(out). Functionally, NDH-1 shuttles electrons from NADH, via FMN and iron-sulfur (Fe-S) centers, to quinones in the respiratory chain. The immediate electron acceptor for the enzyme in this species is believed to be ubiquinone. Couples the redox reaction to proton translocation (for every two electrons transferred, four hydrogen ions are translocated across the cytoplasmic membrane), and thus conserves the redox energy in a proton gradient. The protein is NADH-quinone oxidoreductase subunit I of Xylella fastidiosa (strain 9a5c).